The primary structure comprises 285 residues: MQDQQQVIHKAQPWHGKVGLIYGQRQGKTEMQRCFTQAPFRIQRPFYPEGNRVCHTVLLHTAGGIVGGDRLSLDLELKPESHVFLTTAAANKIYRTNGETAQQDGIIHQAPGSILEYFPQEMIIFDGAEYHQSLRVNLAPGAVWCGWEVLRFGRTARGEKFISGNWRGLTEIWQDDELLWGDRQWLPGHPEVFAAWNGLNNQPVVGSLALVGLEISEAQMAELRQTMATIQQGLGGITQLPKGVLCRYRGPSSTEVKRWFISLWQNWRSLYSPQPPTLSRVWQTY.

It belongs to the UreD family. As to quaternary structure, ureD, UreF and UreG form a complex that acts as a GTP-hydrolysis-dependent molecular chaperone, activating the urease apoprotein by helping to assemble the nickel containing metallocenter of UreC. The UreE protein probably delivers the nickel.

Its subcellular location is the cytoplasm. Functionally, required for maturation of urease via the functional incorporation of the urease nickel metallocenter. The protein is Urease accessory protein UreD of Picosynechococcus sp. (strain ATCC 27264 / PCC 7002 / PR-6) (Agmenellum quadruplicatum).